Reading from the N-terminus, the 406-residue chain is Probable peptidoglycan glycosyltransferase FtsW (406 aa).

Helical transmembrane passes span L22–A42, F56–L76, W86–I106, W116–V136, L153–E173, V186–M206, I280–M300, F318–V338, and L352–V372. Basic and acidic residues predominate over residues S383 to E397. The segment at S383–A406 is disordered.

It belongs to the SEDS family. FtsW subfamily.

The protein resides in the cell inner membrane. It carries out the reaction [GlcNAc-(1-&gt;4)-Mur2Ac(oyl-L-Ala-gamma-D-Glu-L-Lys-D-Ala-D-Ala)](n)-di-trans,octa-cis-undecaprenyl diphosphate + beta-D-GlcNAc-(1-&gt;4)-Mur2Ac(oyl-L-Ala-gamma-D-Glu-L-Lys-D-Ala-D-Ala)-di-trans,octa-cis-undecaprenyl diphosphate = [GlcNAc-(1-&gt;4)-Mur2Ac(oyl-L-Ala-gamma-D-Glu-L-Lys-D-Ala-D-Ala)](n+1)-di-trans,octa-cis-undecaprenyl diphosphate + di-trans,octa-cis-undecaprenyl diphosphate + H(+). It participates in cell wall biogenesis; peptidoglycan biosynthesis. Peptidoglycan polymerase that is essential for cell division. The chain is Probable peptidoglycan glycosyltransferase FtsW from Marinomonas mediterranea (strain ATCC 700492 / JCM 21426 / NBRC 103028 / MMB-1).